The primary structure comprises 202 residues: CASP-like protein 2B1 (202 aa).

The Cytoplasmic segment spans residues 1-29 (MSYLGVGVSPGNVPVYHGTNLKVVDRRVR). A helical transmembrane segment spans residues 30–50 (LAELVLRCVICGLGILAAVLV). Over 51-72 (GTDTQVKVIFTIQKKAKFTDMK) the chain is Extracellular. A helical membrane pass occupies residues 73-93 (ALVFLVIANGIAAAYSLIQGL). At 94–109 (RCVVSMVRGSVLFSKP) the chain is on the cytoplasmic side. A helical transmembrane segment spans residues 110-130 (LAWAIFSGDQVIAYLTLAAVA). The Extracellular segment spans residues 131–164 (AAAQSSVFGEFGQPELQWMKICNMYGKFCNQVGE). Residues 165–185 (GIVSAVGVSLSMVILSGISAF) form a helical membrane-spanning segment. Residues 186–202 (SLFRLYGGNKGTSGGRW) lie on the Cytoplasmic side of the membrane.

It belongs to the Casparian strip membrane proteins (CASP) family. In terms of assembly, homodimer and heterodimers.

The protein resides in the cell membrane. This is CASP-like protein 2B1 from Vitis vinifera (Grape).